A 671-amino-acid chain; its full sequence is TBC1 domain family member 15 (671 aa).

At Ala2 the chain carries N-acetylalanine. Residues Ser23, Ser32, Ser70, Ser205, and Ser257 each carry the phosphoserine modification. In terms of domain architecture, Rab-GAP TBC spans 329–539 (GLSHSLRKQA…RLWEVMWTEL (211 aa)). 2 positions are modified to phosphoserine: Ser623 and Ser655. The interval 650–671 (EAKDDSPTQTLASPNACRLTPA) is disordered. A Phosphothreonine modification is found at Thr669.

As to quaternary structure, interacts with non-phosphorylated form of RAB8A; phosphorylation of RAB8A at 'Thr-72' disrupts this interaction. Interacts with ARMC12. As to expression, ubiquitous, with highest expression in heart, liver and testis and lower expression in brain, spleen, lung, kidney and skeletal muscle.

Its subcellular location is the cytoplasm. Its function is as follows. Acts as a GTPase activating protein for RAB7A. Does not act on RAB4, RAB5 or RAB6. The protein is TBC1 domain family member 15 (Tbc1d15) of Mus musculus (Mouse).